The following is a 293-amino-acid chain: Shikimate kinase (293 aa).

ATP is bound at residue 87–97 (PLAGGLKSSSA).

This sequence belongs to the GHMP kinase family. Archaeal shikimate kinase subfamily.

It localises to the cytoplasm. The enzyme catalyses shikimate + ATP = 3-phosphoshikimate + ADP + H(+). The protein operates within metabolic intermediate biosynthesis; chorismate biosynthesis; chorismate from D-erythrose 4-phosphate and phosphoenolpyruvate: step 5/7. The protein is Shikimate kinase of Methanosarcina mazei (strain ATCC BAA-159 / DSM 3647 / Goe1 / Go1 / JCM 11833 / OCM 88) (Methanosarcina frisia).